The sequence spans 616 residues: Vitamin B12 transporter BtuB (616 aa).

A signal peptide spans 1 to 20 (MIKKISLLTALSVTAFSGWA). Residues 26–33 (DSLVVTAN) carry the TonB box motif. In terms of domain architecture, TBDR plug spans 38–152 (PVNTVLAPTS…IGGVVNIITT (115 aa)). Cyanocob(III)alamin is bound by residues Leu-83, Ser-85, Asn-92, and 110-111 (VT). Residues 155-616 (KDGTTLNAGI…EYTLSGSYTF (462 aa)) form the TBDR beta-barrel domain. 3 beta stranded membrane passes run 158-165 (TTLNAGIG), 169-178 (YQNYGGSTQQ), and 184-195 (TRVTLAGDYTYT). Ca(2+) is bound by residues Asp-199, Gln-211, Asp-213, and Asp-215. Transmembrane regions (beta stranded) follow at residues 217–227 (FMNKTLYGALE) and 232–248 (DQWT…NRTA). Tyr-249, Asp-250, and Asp-263 together coordinate Ca(2+). The next 17 membrane-spanning stretches (beta stranded) occupy residues 265–279 (RQLY…LRFN), 281–298 (DLFH…KDYN), 311–327 (TLDE…NAVD), 330–339 (HGNIGAGVDW), 355–371 (YDLR…QKFG), 373–383 (VTLEGAVRSDD), 387–402 (FGRH…WEFI), 405–419 (YRFI…KAPN), 436–445 (ESKQWEGAFE), 451–460 (VNWRVSAYRN), 475–492 (YYNV…TASF), 496–511 (PLTH…ARNA), 519–531 (RRAK…QLDT), 537–552 (DWSL…YDTD), 560–574 (NVKL…VAVS), 587–598 (IANLFDKDYETA), and 604–616 (AGRE…SYTF). Thr-311 is a binding site for cyanocob(III)alamin. A cyanocob(III)alamin-binding site is contributed by Arg-519. The short motif at 599-616 (YGYATAGREYTLSGSYTF) is the TonB C-terminal box element.

Belongs to the TonB-dependent receptor family. BtuB (TC 1.B.14.3.1) subfamily.

The protein resides in the cell outer membrane. In terms of biological role, involved in the active translocation of vitamin B12 (cyanocobalamin) across the outer membrane to the periplasmic space. It derives its energy for transport by interacting with the trans-periplasmic membrane protein TonB. In Cronobacter sakazakii (strain ATCC BAA-894) (Enterobacter sakazakii), this protein is Vitamin B12 transporter BtuB.